Here is an 822-residue protein sequence, read N- to C-terminus: Serine/threonine-protein phosphatase 4 regulatory subunit 3 (822 aa).

In terms of domain architecture, WH1 spans 1-100 (MTDTRRRVKV…DEIWEKICQV (100 aa)). Residues 744–822 (TSQLSASGHP…PLTKKARLGS (79 aa)) form a disordered region. Residues 761–774 (SPGSPESPGSVSKS) are compositionally biased toward low complexity. The span at 793–808 (YPDDDEEDDDNDEEEK) shows a compositional bias: acidic residues.

This sequence belongs to the SMEK family. Serine/threonine-protein phosphatase 4 (PP4) occurs in different assemblies of the catalytic and one or more regulatory subunits.

Its function is as follows. Regulatory subunit of serine/threonine-protein phosphatase 4. The sequence is that of Serine/threonine-protein phosphatase 4 regulatory subunit 3 (smek1) from Xenopus laevis (African clawed frog).